Here is an 808-residue protein sequence, read N- to C-terminus: Protein SQS1 (808 aa).

Composition is skewed to basic residues over residues 1-20 and 28-37; these read MAKRHKHFESRGGFRKKRGG and RGSKRGRGGR. Disordered regions lie at residues 1-67, 151-180, and 485-529; these read MAKR…GDLS, RSKNQESKEPEEDANKCSEYAEHSEKDMEI, and ETPP…EELG. Basic and acidic residues-rich tracts occupy residues 39–48 and 153–179; these read RGFEETERSA and KNQESKEPEEDANKCSEYAEHSEKDME. Residues 621-683 form the R3H domain; sequence GFHVQNIRDE…HTHIMVEKVK (63 aa). The 48-residue stretch at 748–795 folds into the G-patch domain; that stretch reads QDNIGRRMLEKLGWSSGEGLGAHGNKGISIPVMARVKKSKSGLRHSKE. A disordered region spans residues 764-808; the sequence is GEGLGAHGNKGISIPVMARVKKSKSGLRHSKEDEDTGRSSSFRKK. The segment covering 782–791 has biased composition (basic residues); it reads RVKKSKSGLR.

Belongs to the SQS1 family.

It is found in the cytoplasm. The protein localises to the nucleus. Functionally, may be involved in splicing. In Candida glabrata (strain ATCC 2001 / BCRC 20586 / JCM 3761 / NBRC 0622 / NRRL Y-65 / CBS 138) (Yeast), this protein is Protein SQS1 (SQS1).